Here is a 146-residue protein sequence, read N- to C-terminus: MAEDTKKLEELAYQYQLLQAQAQLLAQNLELLTLGRNEFQAVKETLEGLKNEEGEFEILVPIGAGSFLKGKIVDAKNAIVSVGAGYAVQKSLDDSIEYLEKRIKEYEEAIAKTQEALKKLEAQLGELARQAQEIQQKQAMGFSVKK.

Belongs to the prefoldin subunit alpha family. Heterohexamer of two alpha and four beta subunits.

Its subcellular location is the cytoplasm. Functionally, molecular chaperone capable of stabilizing a range of proteins. Seems to fulfill an ATP-independent, HSP70-like function in archaeal de novo protein folding. This Thermococcus kodakarensis (strain ATCC BAA-918 / JCM 12380 / KOD1) (Pyrococcus kodakaraensis (strain KOD1)) protein is Prefoldin subunit alpha 1.